We begin with the raw amino-acid sequence, 149 residues long: Large ribosomal subunit protein uL16c (149 aa).

It belongs to the universal ribosomal protein uL16 family. As to quaternary structure, part of the 50S ribosomal subunit.

It is found in the plastid. Its subcellular location is the organellar chromatophore. The chain is Large ribosomal subunit protein uL16c (rpl16) from Paulinella chromatophora.